Reading from the N-terminus, the 121-residue chain is MYYVACVFVYNKYIFTFEKENFVEKMNYRLRDKTFNFNQMAQKRNKQSKKPKQTSKGVKKSSKQNKNSSKNNKYQQNVLLQSIDDYNTTQSVLRSAHNSGSKMSDISNSIQLLSMTKKQEN.

Disordered stretches follow at residues 38 to 76 and 91 to 121; these read NQMA…KYQQ and SVLR…KQEN. Residues 43-63 show a composition bias toward basic residues; it reads KRNKQSKKPKQTSKGVKKSSK. A compositionally biased stretch (low complexity) spans 64–76; the sequence is QNKNSSKNNKYQQ.

This is an uncharacterized protein from Schizosaccharomyces pombe (strain 972 / ATCC 24843) (Fission yeast).